Consider the following 473-residue polypeptide: Phosphatidylserine synthase 1 (473 aa).

Alanine 2 carries the N-acetylalanine modification. Residues alanine 2 to aspartate 35 are Cytoplasmic-facing. The chain crosses the membrane as a helical span at residues phenylalanine 36–phenylalanine 56. At alanine 57–glycine 72 the chain is on the lumenal side. The chain crosses the membrane as a helical span at residues isoleucine 73–phenylalanine 93. Topologically, residues threonine 94–arginine 102 are cytoplasmic. The chain crosses the membrane as a helical span at residues methionine 103–phenylalanine 123. Over glutamate 124–tyrosine 186 the chain is Lumenal. A helical transmembrane segment spans residues glycine 187–leucine 207. At proline 208–aspartate 216 the chain is on the cytoplasmic side. A helical transmembrane segment spans residues glutamine 217–cysteine 237. Residues arginine 238–arginine 286 lie on the Lumenal side of the membrane. The helical transmembrane segment at valine 287–leucine 307 threads the bilayer. The Cytoplasmic portion of the chain corresponds to lysine 308 to leucine 319. A helical transmembrane segment spans residues serine 320–leucine 342. The Lumenal segment spans residues threonine 343 to tryptophan 355. The helical transmembrane segment at valine 356 to phenylalanine 376 threads the bilayer. At serine 377 to tyrosine 383 the chain is on the cytoplasmic side. Residues valine 384–tryptophan 404 traverse the membrane as a helical segment. Over tyrosine 405–lysine 473 the chain is Lumenal. A phosphoserine mark is found at serine 417, serine 425, serine 442, and serine 454. Residues isoleucine 428–lysine 473 are disordered. Residues lysine 437–serine 454 are compositionally biased toward basic and acidic residues. The span at serine 455–serine 464 shows a compositional bias: basic residues.

The protein belongs to the phosphatidyl serine synthase family. As to expression, expressed in kidney, testis, lung, skeletal muscle, liver brain, heart and spleen with highest expression in testis, liver, heart and brain.

It is found in the endoplasmic reticulum membrane. It catalyses the reaction a 1,2-diacyl-sn-glycero-3-phosphoethanolamine + L-serine = a 1,2-diacyl-sn-glycero-3-phospho-L-serine + ethanolamine. It carries out the reaction a 1,2-diacyl-sn-glycero-3-phosphocholine + L-serine = a 1,2-diacyl-sn-glycero-3-phospho-L-serine + choline. The protein operates within phospholipid metabolism; phosphatidylserine biosynthesis. With respect to regulation, potently inhibited by choline in the mitochondria-associated membrane (MAM). Very little inhibition by choline in the endoplasmic reticulum (ER) per se. Its function is as follows. Catalyzes a base-exchange reaction in which the polar head group of phosphatidylethanolamine (PE) or phosphatidylcholine (PC) is replaced by L-serine. Catalyzes mainly the conversion of phosphatidylcholine. Also converts, in vitro and to a lesser extent, phosphatidylethanolamine. The polypeptide is Phosphatidylserine synthase 1 (Ptdss1) (Mus musculus (Mouse)).